The sequence spans 283 residues: Pseudokinase OPG198 (283 aa).

Positions 1 and 30 each coordinate ATP. The region spanning 1 to 283 (MESFKYCFDN…DRLRRLFIQD (283 aa)) is the Protein kinase domain.

The protein belongs to the protein kinase superfamily. Ser/Thr protein kinase family. Poxviruses subfamily. Interacts with B1/VPK1. Interacts with host VRK1. Interacts with host VRK2.

Its subcellular location is the host nucleus. Both catalytically active kinases B1/VPK1 and host VRK2 repress B12 inhibitory activity in a B1/VPK1 deletion mutant strain. In terms of biological role, pseudokinase that plays a role in viral DNA replication repression by activating the antiviral protein BANF1 and inhibiting the activity of host VRK1, a cellular modulator of BANF1. The polypeptide is Pseudokinase OPG198 (OPG198) (Homo sapiens (Human)).